Reading from the N-terminus, the 1299-residue chain is DNA-directed RNA polymerase subunit beta' (1299 aa).

Zn(2+) is bound by residues Cys60, Cys62, Cys75, and Cys78. Mg(2+)-binding residues include Asp535, Asp537, and Asp539. Residues Cys877, Cys954, Cys961, and Cys964 each contribute to the Zn(2+) site.

Belongs to the RNA polymerase beta' chain family. The RNAP catalytic core consists of 2 alpha, 1 beta, 1 beta' and 1 omega subunit. When a sigma factor is associated with the core the holoenzyme is formed, which can initiate transcription. The cofactor is Mg(2+). Requires Zn(2+) as cofactor.

It carries out the reaction RNA(n) + a ribonucleoside 5'-triphosphate = RNA(n+1) + diphosphate. Its function is as follows. DNA-dependent RNA polymerase catalyzes the transcription of DNA into RNA using the four ribonucleoside triphosphates as substrates. The chain is DNA-directed RNA polymerase subunit beta' from Paenarthrobacter aurescens (strain TC1).